The chain runs to 285 residues: MDSNNSNNNNKNLKQICDIPKPQFLSKGVFTLVGVLCKFWISMNTVTTSGIDKLVNEIDKTHQLKRPMITIANHSSNLDDPLLWGVLPNRILMDPSKQRWTLGASNILFTNWFYSKFFSLGKCIKIVRGDGIYQDGMNESIDRLSEGQWLHIFPEGRISQQTQLLYFKWGLGRLVGECYRRTGVVPLVVPIYHQGMEKSMPLAKLPIPRVGINLDIKVGDNIYCDQVISKYIDDNKISDLTDYLSQDDKKRKDFYKTITLHIEDEYQKIIPPTNRGRFSHPTIKD.

The Mitochondrial intermembrane portion of the chain corresponds to 1–23 (MDSNNSNNNNKNLKQICDIPKPQ). The stretch at 24–42 (FLSKGVFTLVGVLCKFWIS) is an intramembrane region. The Mitochondrial intermembrane segment spans residues 43–285 (MNTVTTSGID…GRFSHPTIKD (243 aa)). An HXXXXD motif motif is present at residues 74-79 (HSSNLD).

This sequence belongs to the taffazin family.

Its subcellular location is the mitochondrion outer membrane. The protein resides in the mitochondrion inner membrane. The catalysed reaction is a 1-acyl-sn-glycero-3-phosphate + a 1,2-diacyl-sn-glycero-3-phospho-(1'-sn-glycerol) = 1-acyl-sn-glycero-3-phospho-(1'-sn-glycerol) + a 1,2-diacyl-sn-glycero-3-phosphate. It catalyses the reaction 1-hexadecanoyl-2-(9Z,12Z-octadecadienoyl)-sn-glycero-3-phospho-(1'-sn-glycerol) + 1-(9Z-octadecenoyl)-sn-glycero-3-phosphate = 1-(9Z)-octadecenoyl-2-(9Z,12Z)-octadecadienoyl-sn-glycero-3-phosphate + 1-hexadecanoyl-sn-glycero-3-phospho-(1'-sn-glycerol). The enzyme catalyses 1'-[1,2-diacyl-sn-glycero-3-phospho],3'-[1-acyl-sn-glycero-3-phospho]-glycerol + a 1,2-diacyl-sn-glycero-3-phosphocholine = a cardiolipin + a 1-acyl-sn-glycero-3-phosphocholine. It carries out the reaction 1-hexadecanoyl-2-(9Z,12Z-octadecadienoyl)-sn-glycero-3-phosphocholine + 1-hexadecanoyl-sn-glycero-3-phosphocholine = 2-(9Z,12Z-octadecadienoyl)-sn-glycero-3-phosphocholine + 1,2-dihexadecanoyl-sn-glycero-3-phosphocholine. The catalysed reaction is 1,2-di-(9Z-octadecenoyl)-sn-glycero-3-phosphocholine + 1-hexadecanoyl-sn-glycero-3-phosphocholine = 1-hexadecanoyl-2-(9Z-octadecenoyl)-sn-glycero-3-phosphocholine + 1-(9Z-octadecenoyl)-sn-glycero-3-phosphocholine. It functions in the pathway phospholipid metabolism. Its function is as follows. Acyltransferase required to remodel newly synthesized phospholipid cardiolipin (1',3'-bis-[1,2-diacyl-sn-glycero-3-phospho]-glycerol or CL), a key component of the mitochondrial inner membrane, with tissue specific acyl chains necessary for adequate mitochondrial function. Its role in cellular physiology is to improve mitochondrial performance. CL is critical for the coassembly of lipids and proteins in mitochondrial membranes, for instance, remodeling of the acyl groups of CL in the mitochondrial inner membrane affects the assembly and stability of respiratory chain complex IV and its supercomplex forms. Catalyzes the transacylation between phospholipids and lysophospholipids, with the highest rate being between phosphatidylcholine (1,2-diacyl-sn-glycero-3-phosphocholine or PC) and CL. Catalyzes both 1-acyl-sn-glycero-3-phosphocholine (lysophosphatidylcholine or LPC) reacylation and PC-CL transacylation, that means, it exchanges acyl groups between CL and PC by a combination of forward and reverse transacylations. Also catalyzes transacylations between other phospholipids such as phosphatidylethanolamine (1,2-diacyl-sn-glycero-3-phosphoethanolamine or PE) and CL, between PC and PE, and between PC and phosphatidate (1,2-diacyl-sn-glycero-3-phosphate or PA), although at lower rate. Not regiospecific, it transfers acyl groups into any of the sn-1 and sn-2 positions of the monolysocardiolipin (MLCL), which is an important prerequisite for uniformity and symmetry in CL acyl distribution. Cannot transacylate dilysocardiolipin (DLCL), thus, the role of MLCL is limited to that of an acyl acceptor. CoA-independent, it can reshuffle molecular species within a single phospholipid class. Redistributes fatty acids between MLCL, CL, and other lipids, which prolongs the half-life of CL. Its action is completely reversible, which allows for cyclic changes, such as fission and fusion or bending and flattening of the membrane. Hence, by contributing to the flexibility of the lipid composition, it plays an important role in the dynamics of mitochondria membranes. The protein is Taffazin (taz) of Dictyostelium discoideum (Social amoeba).